Reading from the N-terminus, the 126-residue chain is Large ribosomal subunit protein bL12 (126 aa).

Belongs to the bacterial ribosomal protein bL12 family. In terms of assembly, homodimer. Part of the ribosomal stalk of the 50S ribosomal subunit. Forms a multimeric L10(L12)X complex, where L10 forms an elongated spine to which 2 to 4 L12 dimers bind in a sequential fashion. Binds GTP-bound translation factors.

Forms part of the ribosomal stalk which helps the ribosome interact with GTP-bound translation factors. Is thus essential for accurate translation. This chain is Large ribosomal subunit protein bL12, found in Methylocella silvestris (strain DSM 15510 / CIP 108128 / LMG 27833 / NCIMB 13906 / BL2).